The sequence spans 266 residues: L-aspartate dehydrogenase (266 aa).

2 residues coordinate NAD(+): Ala-123 and Asn-189. Residue His-219 is part of the active site.

It belongs to the L-aspartate dehydrogenase family.

It catalyses the reaction L-aspartate + NADP(+) + H2O = oxaloacetate + NH4(+) + NADPH + H(+). It carries out the reaction L-aspartate + NAD(+) + H2O = oxaloacetate + NH4(+) + NADH + H(+). It participates in cofactor biosynthesis; NAD(+) biosynthesis; iminoaspartate from L-aspartate (dehydrogenase route): step 1/1. In terms of biological role, specifically catalyzes the NAD or NADP-dependent dehydrogenation of L-aspartate to iminoaspartate. The chain is L-aspartate dehydrogenase from Cupriavidus taiwanensis (strain DSM 17343 / BCRC 17206 / CCUG 44338 / CIP 107171 / LMG 19424 / R1) (Ralstonia taiwanensis (strain LMG 19424)).